Reading from the N-terminus, the 148-residue chain is Snaclec convulxin subunit beta (148 aa).

The N-terminal stretch at 1–23 (MGRFIFVSFGLLVVFLSLSGSEA) is a signal peptide. 3 cysteine pairs are disulfide-bonded: cysteine 27/cysteine 38, cysteine 55/cysteine 144, and cysteine 121/cysteine 136. The C-type lectin domain occupies 34–148 (YDRYCYKVFK…TYSFVCKFEA (115 aa)).

This sequence belongs to the snaclec family. Tetramer of heterodimers of alpha and beta subunits (alphabeta)(4); disulfide-linked. Expressed by the venom gland.

It is found in the secreted. Snake venom lectin that activates platelets by binding to the platelet collagen receptor glycoprotein VI (GP6). The indirect activation of integrin alpha-IIb/beta-3 (ITGA2B/ITGB3) also induced by the toxin is upstream the cytoskeletal translocation of GPIb, FcRgamma (FCER1G) and 14-3-3zeta (YWHAZ). This is Snaclec convulxin subunit beta from Crotalus durissus terrificus (South American rattlesnake).